Here is a 302-residue protein sequence, read N- to C-terminus: N(G),N(G)-dimethylarginine dimethylaminohydrolase (302 aa).

3 residues coordinate substrate: D102, R127, and R172. Residue H201 is the Proton donor of the active site. C295 functions as the Nucleophile in the catalytic mechanism.

This sequence belongs to the DDAH family.

It catalyses the reaction N(omega),N(omega)-dimethyl-L-arginine + H2O = dimethylamine + L-citrulline. The catalysed reaction is N(omega)-methyl-L-arginine + H2O = L-citrulline + methylamine. Its function is as follows. Hydrolyzes N(G),N(G)-dimethyl-L-arginine (ADMA) and N(G)-monomethyl-L-arginine (MMA). The polypeptide is N(G),N(G)-dimethylarginine dimethylaminohydrolase (Mycobacterium tuberculosis (strain ATCC 25618 / H37Rv)).